A 29-amino-acid polypeptide reads, in one-letter code: Cyclotide psyleio D (29 aa).

Positions 1–29 (GLPVCGESCFGGTCNTPGCSCTWPVCTRD) form a cross-link, cyclopeptide (Gly-Asp). 3 cysteine pairs are disulfide-bonded: Cys5–Cys19, Cys9–Cys21, and Cys14–Cys26.

In terms of processing, this is a cyclic peptide.

Probably participates in a plant defense mechanism. In Psychotria brachyceras, this protein is Cyclotide psyleio D.